The sequence spans 437 residues: tRNA(Ile)-lysidine synthase (437 aa).

22–27 (SGGLDS) provides a ligand contact to ATP.

This sequence belongs to the tRNA(Ile)-lysidine synthase family.

Its subcellular location is the cytoplasm. It catalyses the reaction cytidine(34) in tRNA(Ile2) + L-lysine + ATP = lysidine(34) in tRNA(Ile2) + AMP + diphosphate + H(+). Its function is as follows. Ligates lysine onto the cytidine present at position 34 of the AUA codon-specific tRNA(Ile) that contains the anticodon CAU, in an ATP-dependent manner. Cytidine is converted to lysidine, thus changing the amino acid specificity of the tRNA from methionine to isoleucine. This Xylella fastidiosa (strain 9a5c) protein is tRNA(Ile)-lysidine synthase.